The primary structure comprises 510 residues: Serine carboxypeptidase 1 (510 aa).

The N-terminal stretch at 1–25 (MARRGRRSLASPAVAIALFVFLAYG) is a signal peptide. Residues 26-36 (GGGGGGGVCEA) constitute a propeptide that is removed on maturation. Intrachain disulfides connect Cys98–Cys399, Cys262–Cys274, and Cys297–Cys366. Residue Asn154 is glycosylated (N-linked (GlcNAc...) asparagine). Ser194 is an active-site residue. Asn268 is a glycosylation site (N-linked (GlcNAc...) asparagine). Positions 303–362 (IKKVTPANTKLPKSFQHLGTTTKPLAVRTRMHGRAWPLRAPVRAGRVPSWQEFARGSRPS) are cleaved as a propeptide — linker peptide. Asn418 carries N-linked (GlcNAc...) asparagine glycosylation. Active-site residues include Asp434 and His487. Residues 508 to 510 (SKL) carry the Microbody targeting signal motif.

It belongs to the peptidase S10 family.

The enzyme catalyses Release of a C-terminal amino acid with broad specificity.. The protein is Serine carboxypeptidase 1 (CBP1) of Oryza sativa subsp. japonica (Rice).